Consider the following 295-residue polypeptide: ATP synthase gamma chain (295 aa).

This sequence belongs to the ATPase gamma chain family. F-type ATPases have 2 components, CF(1) - the catalytic core - and CF(0) - the membrane proton channel. CF(1) has five subunits: alpha(3), beta(3), gamma(1), delta(1), epsilon(1). CF(0) has three main subunits: a, b and c.

Its subcellular location is the cell membrane. Functionally, produces ATP from ADP in the presence of a proton gradient across the membrane. The gamma chain is believed to be important in regulating ATPase activity and the flow of protons through the CF(0) complex. The chain is ATP synthase gamma chain from Acetivibrio thermocellus (strain ATCC 27405 / DSM 1237 / JCM 9322 / NBRC 103400 / NCIMB 10682 / NRRL B-4536 / VPI 7372) (Clostridium thermocellum).